Consider the following 286-residue polypeptide: L-cysteine S-thiosulfotransferase subunit SoxA (286 aa).

Residues 1 to 27 (MKKTIQRGLFTGALVLMTAMTAKPANA) form the signal peptide. Cysteines 106 and 137 form a disulfide. The Cytochrome c domain maps to 180–286 (DAYMKGKKFF…LKYNGPASRK (107 aa)). Heme-binding residues include cysteine 200 and histidine 204. Position 243 (arginine 243) interacts with substrate. Cysteine 247 lines the heme pocket. Cysteine 247 acts as the Cysteine persulfide intermediate in catalysis.

Belongs to the SoxA family. In terms of assembly, heterodimer of SoxA and SoxX. The SoxAX complex interacts with CT1020, SoxAX-binding protein SaxB (SoxK); this interaction seems to be between SoxA and CT1020 and stimulates catalytic activity of the SoxAX complex. Heme serves as cofactor. In terms of processing, cysteine persulfide at Cys-247.

The protein resides in the periplasm. It carries out the reaction L-cysteinyl-[SoxY protein] + thiosulfate + 2 Fe(III)-[cytochrome c] = S-sulfosulfanyl-L-cysteinyl-[SoxY protein] + 2 Fe(II)-[cytochrome c] + 2 H(+). It catalyses the reaction S-sulfanyl-L-cysteinyl-[SoxY protein] + thiosulfate + 2 Fe(III)-[cytochrome c] = S-(2-sulfodisulfanyl)-L-cysteinyl-[SoxY protein] + 2 Fe(II)-[cytochrome c] + 2 H(+). Its function is as follows. C-type monoheme cytochrome, which is part of the SoxAX cytochrome complex involved in sulfur oxidation. The SoxAX complex catalyzes the formation of a heterodisulfide bond between the conserved cysteine residue on a sulfur carrier SoxYZ complex subunit SoxY and thiosulfate or other inorganic sulfur substrates. This leads to the liberation of two electrons, which may be transferred from the SoxAX complex to another cytochrome c and which then may be used for reductive CO(2) fixation. In Chlorobaculum tepidum (strain ATCC 49652 / DSM 12025 / NBRC 103806 / TLS) (Chlorobium tepidum), this protein is L-cysteine S-thiosulfotransferase subunit SoxA.